Here is a 144-residue protein sequence, read N- to C-terminus: Large ribosomal subunit protein uL16 (144 aa).

Residues 1-19 (MLLPKRVKYRRQHRPKTTG) show a composition bias toward basic residues. The tract at residues 1-23 (MLLPKRVKYRRQHRPKTTGRSKG) is disordered.

Belongs to the universal ribosomal protein uL16 family. As to quaternary structure, part of the 50S ribosomal subunit.

Binds 23S rRNA and is also seen to make contacts with the A and possibly P site tRNAs. In Staphylococcus carnosus (strain TM300), this protein is Large ribosomal subunit protein uL16.